A 339-amino-acid polypeptide reads, in one-letter code: Fructose-1,6-bisphosphatase class 1 (339 aa).

E94, D116, L118, and D119 together coordinate Mg(2+). Residues 119 to 122 (DGSS), N210, and K276 contribute to the substrate site. E282 is a binding site for Mg(2+).

The protein belongs to the FBPase class 1 family. As to quaternary structure, homotetramer. Mg(2+) is required as a cofactor.

The protein localises to the cytoplasm. It carries out the reaction beta-D-fructose 1,6-bisphosphate + H2O = beta-D-fructose 6-phosphate + phosphate. Its pathway is carbohydrate biosynthesis; gluconeogenesis. This Burkholderia ambifaria (strain ATCC BAA-244 / DSM 16087 / CCUG 44356 / LMG 19182 / AMMD) (Burkholderia cepacia (strain AMMD)) protein is Fructose-1,6-bisphosphatase class 1.